Consider the following 304-residue polypeptide: Ribosomal RNA large subunit methyltransferase F (304 aa).

Belongs to the methyltransferase superfamily. METTL16/RlmF family.

It localises to the cytoplasm. The enzyme catalyses adenosine(1618) in 23S rRNA + S-adenosyl-L-methionine = N(6)-methyladenosine(1618) in 23S rRNA + S-adenosyl-L-homocysteine + H(+). Functionally, specifically methylates the adenine in position 1618 of 23S rRNA. The sequence is that of Ribosomal RNA large subunit methyltransferase F from Klebsiella pneumoniae subsp. pneumoniae (strain ATCC 700721 / MGH 78578).